A 182-amino-acid polypeptide reads, in one-letter code: Ribosome-recycling factor (182 aa).

This sequence belongs to the RRF family.

The protein localises to the cytoplasm. Responsible for the release of ribosomes from messenger RNA at the termination of protein biosynthesis. May increase the efficiency of translation by recycling ribosomes from one round of translation to another. This chain is Ribosome-recycling factor, found in Synechococcus sp. (strain JA-2-3B'a(2-13)) (Cyanobacteria bacterium Yellowstone B-Prime).